The following is a 113-amino-acid chain: Prefoldin subunit beta (113 aa).

The protein belongs to the prefoldin subunit beta family. As to quaternary structure, heterohexamer of two alpha and four beta subunits.

The protein localises to the cytoplasm. Functionally, molecular chaperone capable of stabilizing a range of proteins. Seems to fulfill an ATP-independent, HSP70-like function in archaeal de novo protein folding. This chain is Prefoldin subunit beta, found in Methanococcus vannielii (strain ATCC 35089 / DSM 1224 / JCM 13029 / OCM 148 / SB).